The chain runs to 278 residues: HTH-type transcriptional activator RhaS (278 aa).

Positions 174–272 (NLLLAWLEDH…NWSPRDIRQG (99 aa)) constitute an HTH araC/xylS-type domain. 2 DNA-binding regions (H-T-H motif) span residues 191–212 (DAVA…KQKT) and 239–262 (VTDI…RREF).

Binds DNA as a dimer.

Its subcellular location is the cytoplasm. Activates expression of the rhaBAD and rhaT operons. This Escherichia coli O45:K1 (strain S88 / ExPEC) protein is HTH-type transcriptional activator RhaS.